The chain runs to 577 residues: Arginine--tRNA ligase (577 aa).

The short motif at Pro-122–His-132 is the 'HIGH' region element.

This sequence belongs to the class-I aminoacyl-tRNA synthetase family. Monomer.

It localises to the cytoplasm. The catalysed reaction is tRNA(Arg) + L-arginine + ATP = L-arginyl-tRNA(Arg) + AMP + diphosphate. This chain is Arginine--tRNA ligase, found in Escherichia coli O1:K1 / APEC.